The chain runs to 257 residues: Probable amino-acid ABC transporter ATP-binding protein y4tH (257 aa).

The 246-residue stretch at 6 to 251 folds into the ABC transporter domain; it reads IVFDKVKKAY…PKEERTREFL (246 aa). 38–45 contributes to the ATP binding site; the sequence is GPSGSGKS.

Belongs to the ABC transporter superfamily.

It localises to the cell inner membrane. Probably part of a binding-protein-dependent transport system y4tEFGH for an amino acid. Probably responsible for energy coupling to the transport system. The sequence is that of Probable amino-acid ABC transporter ATP-binding protein y4tH from Sinorhizobium fredii (strain NBRC 101917 / NGR234).